Reading from the N-terminus, the 78-residue chain is Probable [Fe-S]-dependent transcriptional repressor (78 aa).

Residues Cys-56, Cys-61, Cys-64, and Cys-70 each contribute to the iron-sulfur cluster site.

The protein belongs to the FeoC family.

In terms of biological role, may function as a transcriptional regulator that controls feoABC expression. In Escherichia coli O9:H4 (strain HS), this protein is Probable [Fe-S]-dependent transcriptional repressor.